We begin with the raw amino-acid sequence, 353 residues long: Quinolinate synthase (353 aa).

Iminosuccinate is bound by residues His-47 and Ser-68. [4Fe-4S] cluster is bound at residue Cys-113. Residues 139 to 141 (YAN) and Ser-156 contribute to the iminosuccinate site. Cys-200 contributes to the [4Fe-4S] cluster binding site. Iminosuccinate contacts are provided by residues 226-228 (HPE) and Thr-243. Cys-297 contributes to the [4Fe-4S] cluster binding site.

Belongs to the quinolinate synthase family. Type 1 subfamily. [4Fe-4S] cluster serves as cofactor.

It localises to the cytoplasm. The enzyme catalyses iminosuccinate + dihydroxyacetone phosphate = quinolinate + phosphate + 2 H2O + H(+). Its pathway is cofactor biosynthesis; NAD(+) biosynthesis; quinolinate from iminoaspartate: step 1/1. Functionally, catalyzes the condensation of iminoaspartate with dihydroxyacetone phosphate to form quinolinate. The chain is Quinolinate synthase from Vibrio vulnificus (strain CMCP6).